The primary structure comprises 199 residues: Segregation and condensation protein B (199 aa).

It belongs to the ScpB family. Homodimer. Homodimerization may be required to stabilize the binding of ScpA to the Smc head domains. Component of a cohesin-like complex composed of ScpA, ScpB and the Smc homodimer, in which ScpA and ScpB bind to the head domain of Smc. The presence of the three proteins is required for the association of the complex with DNA.

It is found in the cytoplasm. Participates in chromosomal partition during cell division. May act via the formation of a condensin-like complex containing Smc and ScpA that pull DNA away from mid-cell into both cell halves. The chain is Segregation and condensation protein B from Leuconostoc mesenteroides subsp. mesenteroides (strain ATCC 8293 / DSM 20343 / BCRC 11652 / CCM 1803 / JCM 6124 / NCDO 523 / NBRC 100496 / NCIMB 8023 / NCTC 12954 / NRRL B-1118 / 37Y).